Here is a 369-residue protein sequence, read N- to C-terminus: MATPLFHADLTVHTQSHDYPIVITENAIAENSSMASQVAPYITGRQVLIVTNETVAPLYLKALQEELEAQFTVQVCVLPDGEQYKNQSSINQIYDVLMAVHFNRDVTLIALGGGVIGDMTGFAAASFMRGVNFIQIPTTLLSQVDSSVGGKTGINHPQGKNMIGAFWQPQMVLADMSTLKTLPARELSAGLAEVIKYALIMDAEFLTWLEHNLPAMMALDLAVLGEAVKRCCQYKADVVAQDERESGVRALLNFGHTFGHVIETHEGYGSWLHGEAVAAGMVQAAELSQKIGWLTSDEVACVKRILSLANLPITPPPIEVQTALDLMGHDKKVKHGQIRLILLKSLGEAVLTNDFDPHLLTDVLATHAP.

NAD(+) is bound by residues 80–85 (DGEQYK), 114–118 (GVIGD), 138–139 (TT), Lys151, Lys160, and 178–181 (TLKT). Residues Glu193, His256, and His273 each contribute to the Zn(2+) site.

It belongs to the sugar phosphate cyclases superfamily. Dehydroquinate synthase family. Co(2+) is required as a cofactor. Requires Zn(2+) as cofactor. NAD(+) serves as cofactor.

It localises to the cytoplasm. It carries out the reaction 7-phospho-2-dehydro-3-deoxy-D-arabino-heptonate = 3-dehydroquinate + phosphate. It functions in the pathway metabolic intermediate biosynthesis; chorismate biosynthesis; chorismate from D-erythrose 4-phosphate and phosphoenolpyruvate: step 2/7. Catalyzes the conversion of 3-deoxy-D-arabino-heptulosonate 7-phosphate (DAHP) to dehydroquinate (DHQ). The protein is 3-dehydroquinate synthase of Psychrobacter cryohalolentis (strain ATCC BAA-1226 / DSM 17306 / VKM B-2378 / K5).